Consider the following 294-residue polypeptide: Protoheme IX farnesyltransferase (294 aa).

Helical transmembrane passes span 19-39, 41-61, 89-109, 111-131, 138-158, 166-186, 218-238, and 272-292; these read PKQT…AGGM, LDAL…TTSV, VEAL…SYLI, PWTA…YTMW, LSII…WAAA, AIMI…YISI, VLMI…PIFL, and SPVE…RILW.

It belongs to the UbiA prenyltransferase family. Protoheme IX farnesyltransferase subfamily.

The protein localises to the cell membrane. The enzyme catalyses heme b + (2E,6E)-farnesyl diphosphate + H2O = Fe(II)-heme o + diphosphate. The protein operates within porphyrin-containing compound metabolism; heme O biosynthesis; heme O from protoheme: step 1/1. In terms of biological role, converts heme B (protoheme IX) to heme O by substitution of the vinyl group on carbon 2 of heme B porphyrin ring with a hydroxyethyl farnesyl side group. The protein is Protoheme IX farnesyltransferase of Korarchaeum cryptofilum (strain OPF8).